The chain runs to 582 residues: Enhancer of polycomb-like protein 1 (582 aa).

Residues 238 to 295 (RDAQSADKLRRLRKELEDARQLVALVRQRELARKEMLSMERQIFLQRSEVKEMKRKLN) adopt a coiled-coil conformation. The tract at residues 323 to 351 (PEQPKKKPAEAPAAQRPTAPQIRMPQKPG) is disordered. Positions 352 to 385 (TQAADDMQLLEDVQAEKENEILRDIKQNIAKHIK) form a coiled coil. A compositionally biased stretch (low complexity) spans 539 to 555 (AQAHAQAQAQKRLQAEQ). The segment at 539-582 (AQAHAQAQAQKRLQAEQTTTNNGPPNIGHTMGSNPGPGAVASTS) is disordered.

Belongs to the enhancer of polycomb family. As to quaternary structure, component of the NuA4 histone acetyltransferase complex.

Its subcellular location is the nucleus. In terms of biological role, component of the NuA4 histone acetyltransferase complex which is involved in transcriptional activation of selected genes principally by acetylation of nucleosomal histone H4 and H2A. The NuA4 complex is also involved in DNA repair. Involved in gene silencing by neighboring heterochromatin, blockage of the silencing spreading along the chromosome, and required for cell cycle progression through G2/M. The protein is Enhancer of polycomb-like protein 1 (epl1) of Aspergillus fumigatus (strain ATCC MYA-4609 / CBS 101355 / FGSC A1100 / Af293) (Neosartorya fumigata).